The sequence spans 988 residues: MTKRETVERRLSEVPPGVIRPYTQTELKSVFSTLKDIGKAEPAVAALLAGESPLKDFIAAAFTLSPYLRDMAAADEGLLTLAISKPLEPLLTDLVRDARDCWKPAEDAVPVENEVMSRLRIAKRRLSFVAALADLARIFTARDTTRWLSEMADASLSAAIDHLLLSAHESGKLKLKNLAAPSEGSGLIVLGMGKLGARELNYSSDIDAVVFFEPSAGIIDDPYDATENFGRMMRRLVRIMQERTADGYVFRTDLRLRPDPGSTPLAIPVEAALLYYEGRGQNWERAAYIKARPVAGDIKAGENFLRELTPFIFRKYLDYAAIADIHSIKRQIHAHKGHGAIAVKGHNVKLGRGGIREIEFFAQTQQLIAGGRMPPLRVRATEDALAALTEAKWIDAETRDSLTEAYWFLREVEHRIQMVRDEQTHVLPDTEAELKRIAFMLGFEDTKAFSEKLEEVLRLVERRYSALFEQETKLSGEAGNLVFTGQKDDPDTLKTLSTLGFQRPEDISRVIRTWHNGRYRATQSVEARERLTELTPDLLRAFGESKRADEALLRFDNFLSGLPAGIQLFSLLGNNPALLSLLVTIMSSAPRLAEIIAARPHVFDGMLDPALMSDVPTRDYLAHRMGNFLSNARHYEDILDRLRIFAAEQRFLIGVRLLTGAIRGEVAARAFTHLADLVIEAALNAVLSEMEAAHGPYPGGRVAVMGMGKLGSFELTAGSDVDLILLYDYDDTAQESTGAKPLDVVRYFTRVTQRLIAALSAPTAEGVLYEVDMRLRPSGNKGPVATRISAFEKYQREEAWTWEHMALSRARLICGDASLMEDARSIIASILSQKRDVAKVSTDVLDMRSLIEQEKPPENNWDFKLINGGLIDLEFIAQYLALIGPVKGLGAHEPGRNTAEALQALAAPVMESQAFDDCMAAMGLYTEISQIVRLCIDGAFNPKEAPAGLIDLVCRAGDCPDIPTLEGEVKRLSKAVRKAFVAVVKNGG.

An adenylyl removase region spans residues 1–472 (MTKRETVERR…RYSALFEQET (472 aa)). The interval 476–988 (GEAGNLVFTG…AFVAVVKNGG (513 aa)) is adenylyl transferase.

It belongs to the GlnE family. Mg(2+) serves as cofactor.

The catalysed reaction is [glutamine synthetase]-O(4)-(5'-adenylyl)-L-tyrosine + phosphate = [glutamine synthetase]-L-tyrosine + ADP. The enzyme catalyses [glutamine synthetase]-L-tyrosine + ATP = [glutamine synthetase]-O(4)-(5'-adenylyl)-L-tyrosine + diphosphate. Involved in the regulation of glutamine synthetase GlnA, a key enzyme in the process to assimilate ammonia. When cellular nitrogen levels are high, the C-terminal adenylyl transferase (AT) inactivates GlnA by covalent transfer of an adenylyl group from ATP to specific tyrosine residue of GlnA, thus reducing its activity. Conversely, when nitrogen levels are low, the N-terminal adenylyl removase (AR) activates GlnA by removing the adenylyl group by phosphorolysis, increasing its activity. The regulatory region of GlnE binds the signal transduction protein PII (GlnB) which indicates the nitrogen status of the cell. This Agrobacterium fabrum (strain C58 / ATCC 33970) (Agrobacterium tumefaciens (strain C58)) protein is Bifunctional glutamine synthetase adenylyltransferase/adenylyl-removing enzyme.